We begin with the raw amino-acid sequence, 323 residues long: Fructose-1,6-bisphosphatase class 1 (323 aa).

Mg(2+) is bound by residues E84, D103, L105, and D106. Residues 106–109 (DGSS), N198, and K264 contribute to the substrate site. A Mg(2+)-binding site is contributed by E270.

This sequence belongs to the FBPase class 1 family. As to quaternary structure, homotetramer. The cofactor is Mg(2+).

The protein localises to the cytoplasm. It catalyses the reaction beta-D-fructose 1,6-bisphosphate + H2O = beta-D-fructose 6-phosphate + phosphate. It functions in the pathway carbohydrate biosynthesis; gluconeogenesis. The polypeptide is Fructose-1,6-bisphosphatase class 1 (Pseudoalteromonas atlantica (strain T6c / ATCC BAA-1087)).